A 455-amino-acid chain; its full sequence is tRNA modification GTPase MnmE (455 aa).

(6S)-5-formyl-5,6,7,8-tetrahydrofolate contacts are provided by Arg25, Glu85, and Arg124. The TrmE-type G domain maps to 221-375 (GLSTAIIGRP…IEERINKLFF (155 aa)). A K(+)-binding site is contributed by Asn231. Residues 231 to 236 (NVGKSS), 250 to 256 (TDIEGTT), and 275 to 278 (DTAG) contribute to the GTP site. Ser235 serves as a coordination point for Mg(2+). K(+) is bound by residues Thr250, Ile252, and Thr255. Residue Thr256 participates in Mg(2+) binding. Residue Lys455 coordinates (6S)-5-formyl-5,6,7,8-tetrahydrofolate.

This sequence belongs to the TRAFAC class TrmE-Era-EngA-EngB-Septin-like GTPase superfamily. TrmE GTPase family. In terms of assembly, homodimer. Heterotetramer of two MnmE and two MnmG subunits. K(+) serves as cofactor.

The protein localises to the cytoplasm. Its function is as follows. Exhibits a very high intrinsic GTPase hydrolysis rate. Involved in the addition of a carboxymethylaminomethyl (cmnm) group at the wobble position (U34) of certain tRNAs, forming tRNA-cmnm(5)s(2)U34. This chain is tRNA modification GTPase MnmE, found in Streptococcus mutans serotype c (strain ATCC 700610 / UA159).